Reading from the N-terminus, the 367-residue chain is Flagellin 2 (367 aa).

This sequence belongs to the bacterial flagellin family.

It is found in the secreted. The protein localises to the bacterial flagellum. Functionally, flagellin is the subunit protein which polymerizes to form the filaments of bacterial flagella. The polypeptide is Flagellin 2 (fliC2) (Proteus mirabilis).